The sequence spans 189 residues: Peptidyl-tRNA hydrolase (189 aa).

Y15 lines the tRNA pocket. H20 functions as the Proton acceptor in the catalytic mechanism. Y65, N67, and N113 together coordinate tRNA.

It belongs to the PTH family. In terms of assembly, monomer.

The protein resides in the cytoplasm. It catalyses the reaction an N-acyl-L-alpha-aminoacyl-tRNA + H2O = an N-acyl-L-amino acid + a tRNA + H(+). Its function is as follows. Hydrolyzes ribosome-free peptidyl-tRNAs (with 1 or more amino acids incorporated), which drop off the ribosome during protein synthesis, or as a result of ribosome stalling. Functionally, catalyzes the release of premature peptidyl moieties from peptidyl-tRNA molecules trapped in stalled 50S ribosomal subunits, and thus maintains levels of free tRNAs and 50S ribosomes. The protein is Peptidyl-tRNA hydrolase of Caldicellulosiruptor saccharolyticus (strain ATCC 43494 / DSM 8903 / Tp8T 6331).